The primary structure comprises 356 residues: UDP-3-O-acylglucosamine N-acyltransferase (356 aa).

Histidine 242 (proton acceptor) is an active-site residue.

It belongs to the transferase hexapeptide repeat family. LpxD subfamily. As to quaternary structure, homotrimer.

The catalysed reaction is a UDP-3-O-[(3R)-3-hydroxyacyl]-alpha-D-glucosamine + a (3R)-hydroxyacyl-[ACP] = a UDP-2-N,3-O-bis[(3R)-3-hydroxyacyl]-alpha-D-glucosamine + holo-[ACP] + H(+). It participates in bacterial outer membrane biogenesis; LPS lipid A biosynthesis. Catalyzes the N-acylation of UDP-3-O-acylglucosamine using 3-hydroxyacyl-ACP as the acyl donor. Is involved in the biosynthesis of lipid A, a phosphorylated glycolipid that anchors the lipopolysaccharide to the outer membrane of the cell. This Acinetobacter baylyi (strain ATCC 33305 / BD413 / ADP1) protein is UDP-3-O-acylglucosamine N-acyltransferase.